We begin with the raw amino-acid sequence, 784 residues long: Toll-like receptor 2 (784 aa).

The first 20 residues, 1-20 (MPHTLWMVWVLGVIISLSKE), serve as a signal peptide directing secretion. The Extracellular portion of the chain corresponds to 21 to 587 (ESSNQASLSC…VRLSVSECHR (567 aa)). Cys-30 and Cys-36 are oxidised to a cystine. LRR repeat units follow at residues 54–77 (VKCLDLSNNRITYISNSDLQRYVN), 78–101 (LQALVLTSNGINTIEEDSFSSLGR), 102–125 (LEHLDLSYNYLSNLSSSWFKPLSS), 126–150 (LKFLNLLGNPYKTLGETSLFSHLTK), 151–175 (LRILRVGNMDTFTKIQRKDFAGLTF), 176–199 (LEELEIDASDLQSYEPKSLKSIQN), 200–223 (VSHLILHMKQHILLLEIFVDLTSS), 224–250 (VECLELRDTDLNTFHFSELSTGETNSL), 251–278 (IKKFTFRNVKITDESLFQVMKLLSQISG), 279–308 (LLELEFDDCTLNGVGDFRGSDNDRVIDPGK), 309–337 (VETLTIRRLHIPQFYSFNDLSTLYPLTER), 338–361 (VKRITVENSKVFLVPCLLSRHLKS), 362–388 (LEYLDLSENLMVEEYLKNSACEDAWPS), 389–414 (LQTLILRQNHLASLGKIGETLLTLKN), 415–437 (LTNLDISKNTFHYMPETCQWPEK), 438–457 (MKYLNLSSTRIHSVTGCIPK), 458–478 (TLEILDISNNNLNLFSLNLPQ), 479–500 (LKELYISRNKLMTLPDASLLPM), and 501–524 (LLVLKISRNTITTFSKEQLDSFHT). The N-linked (GlcNAc...) asparagine glycan is linked to Asn-114. Residue Asn-199 is glycosylated (N-linked (GlcNAc...) asparagine). A disulfide bridge connects residues Cys-353 and Cys-382. N-linked (GlcNAc...) asparagine glycosylation occurs at Asn-414. Cys-432 and Cys-454 are disulfide-bonded. The N-linked (GlcNAc...) asparagine glycan is linked to Asn-442. Residues 525 to 579 (LKTLEAGGNNFICSCEFLSFTQEQQALAKVLVDWPANYLCDSPSHVRGQRVQDVR) form the LRRCT domain. The chain crosses the membrane as a helical span at residues 588-608 (AALVSGMCCALFLLILLMGVL). Residues 609–784 (CHRFHGLWYM…WVNLRAAIKS (176 aa)) lie on the Cytoplasmic side of the membrane. The 144-residue stretch at 639 to 782 (ICYDAFVSYS…GFWVNLRAAI (144 aa)) folds into the TIR domain. Lys-754 is covalently cross-linked (Glycyl lysine isopeptide (Lys-Gly) (interchain with G-Cter in ubiquitin)). Positions 761-778 (YLEWPMDEARQEGFWVNL) match the ATG16L1-binding motif motif.

This sequence belongs to the Toll-like receptor family. Interacts with LY96, TLR1 and TLR6 (via extracellular domain). TLR2 seems to exist in heterodimers with either TLR1 or TLR6 before stimulation by the ligand. The heterodimers form bigger oligomers in response to their corresponding ligands as well as further heterotypic associations with other receptors such as CD14 and/or CD36. Binds MYD88 (via TIR domain). Interacts with TICAM1. Interacts with CNPY3. Interacts with ATG16L1. Interacts with PPP1R11. Interacts with TICAM2. Interacts with TIRAP. Ubiquitinated at Lys-754 by PPP1R11, leading to its degradation. Deubiquitinated by USP2. Post-translationally, glycosylation of Asn-442 is critical for secretion of the N-terminal ectodomain of TLR2.

It is found in the membrane. The protein resides in the cytoplasmic vesicle. The protein localises to the phagosome membrane. Its subcellular location is the membrane raft. In terms of biological role, cooperates with LY96 to mediate the innate immune response to bacterial lipoproteins and other microbial cell wall components. Cooperates with TLR1 or TLR6 to mediate the innate immune response to bacterial lipoproteins or lipopeptides. Acts via MYD88 and TRAF6, leading to NF-kappa-B activation, cytokine secretion and the inflammatory response. May also promote apoptosis in response to lipoproteins. Forms activation clusters composed of several receptors depending on the ligand, these clusters trigger signaling from the cell surface and subsequently are targeted to the Golgi in a lipid-raft dependent pathway. Forms the cluster TLR2:TLR6:CD14:CD36 in response to diacylated lipopeptides and TLR2:TLR1:CD14 in response to triacylated lipopeptides. This is Toll-like receptor 2 (TLR2) from Macaca mulatta (Rhesus macaque).